Here is a 679-residue protein sequence, read N- to C-terminus: Stress-70 protein, mitochondrial (679 aa).

The transit peptide at 1-46 (MISASRAVAARLVGAAASRGPTAARHQDGWNGLSHEAFRIVSRRDY) directs the protein to the mitochondrion. An interaction with NFS1 region spans residues 1–432 (MISASRAVAA…IQGGVLAGDV (432 aa)). ADP is bound by residues Thr-63 and Asn-64. The interval 63 to 431 (TNSCVAVMEG…AIQGGVLAGD (369 aa)) is nucleotide-binding domain (NBD). An N6-acetyllysine modification is found at Lys-76. At Thr-87 the chain carries Phosphothreonine. N6-acetyllysine; alternate occurs at positions 135 and 138. Residues Lys-135 and Lys-138 each carry the N6-succinyllysine; alternate modification. Lys-143 is subject to N6-acetyllysine. Lys-206 is subject to N6-acetyllysine; alternate. The residue at position 206 (Lys-206) is an N6-succinyllysine; alternate. Lys-206 carries the post-translational modification N6-malonyllysine; alternate. N6-acetyllysine occurs at positions 234 and 288. N6-acetyllysine; alternate is present on Lys-300. Lys-300 carries the N6-succinyllysine; alternate modification. The ADP site is built by Glu-313, Lys-316, and Ser-320. An N6-succinyllysine modification is found at Lys-368. Positions 388 and 391 each coordinate ADP. Lys-394 carries the N6-succinyllysine modification. Ser-408 carries the post-translational modification Phosphoserine. Residues 432–441 (VTDVLLLDVT) form an interdomain linker region. The segment at 432-679 (VTDVLLLDVT…QKEDQKEEKQ (248 aa)) is interaction with FXN and ISCU. The interval 442-679 (PLSLGIETLG…QKEDQKEEKQ (238 aa)) is substrate-binding domain (SBD). Arg-513 carries the post-translational modification Omega-N-methylarginine. N6-acetyllysine; alternate is present on residues Lys-567 and Lys-600. An N6-succinyllysine; alternate mark is found at Lys-567 and Lys-600. Lys-610 is modified (N6-succinyllysine). The residue at position 612 (Lys-612) is an N6-acetyllysine. An N6-acetyllysine; alternate modification is found at Lys-646. An N6-succinyllysine; alternate modification is found at Lys-646. The disordered stretch occupies residues 656–679 (ASEREGSGSSGTGEQKEDQKEEKQ). Over residues 669-679 (EQKEDQKEEKQ) the composition is skewed to basic and acidic residues.

It belongs to the heat shock protein 70 family. As to quaternary structure, interacts strongly with the intermediate form of FXN and weakly with its mature form. Interacts with HSCB. Associates with the mitochondrial contact site and cristae organizing system (MICOS) complex, composed of at least MICOS10/MIC10, CHCHD3/MIC19, CHCHD6/MIC25, APOOL/MIC27, IMMT/MIC60, APOO/MIC23/MIC26 and QIL1/MIC13. This complex was also known under the names MINOS or MitOS complex. The MICOS complex associates with mitochondrial outer membrane proteins SAMM50, MTX1, MTX2 and DNAJC11, mitochondrial inner membrane protein TMEM11 and with HSPA9. Interacts with DNLZ, the interaction is required to prevent self-aggregation. Interacts with TESPA1. Interacts with PDPN. Interacts with NFU1, NFS1 and ISCU. Interacts with TP53; the interaction promotes TP53 degradation. Interacts (via SBD domain) with UBXN2A; the interaction with UBXN2A inhibits HSPA9/MOT-2 interaction with and degradation of TP53, thereby promotes TP53 translocation to the nucleus. Interacts with ITPR1 AND VDAC1; this interaction couples ITPR1 to VDAC1. Component of the TIM23 mitochondrial inner membrane pre-sequence translocase complex.

Its subcellular location is the mitochondrion. It localises to the nucleus. It is found in the nucleolus. The protein localises to the cytoplasm. The protein resides in the mitochondrion matrix. It catalyses the reaction ATP + H2O = ADP + phosphate + H(+). The chaperone activity is regulated by ATP-induced allosteric coupling of the nucleotide-binding (NBD) and substrate-binding (SBD) domains. ATP binding in the nucleotide-binding pocket (NBP) leads to a conformational change in the NBD, which is transferred through the interdomain linker (IDL) to the substrate-binding domain (SBD). This elicits a reduced substrate affinity and a faster substrate exchange rate. Upon hydrolysis of ATP to ADP, the protein undergoes a conformational change that increases its affinity for substrate proteins. It cycles through repeated phases of ATP hydrolysis and nucleotide exchange, facilitating repeated cycles of substrate binding and release. Functions in collaboration with co-chaperones. Functions with the co-chaperone, DNLZ, to maintain solubility and regulate ATP hydrolysis. Nucleotide exchange factors, GRPEL1 and GRPEL2, accelerate nucleotide exchange. Its function is as follows. Mitochondrial chaperone that plays a key role in mitochondrial protein import, folding, and assembly. Plays an essential role in the protein quality control system, the correct folding of proteins, the re-folding of misfolded proteins, and the targeting of proteins for subsequent degradation. These processes are achieved through cycles of ATP binding, ATP hydrolysis, and ADP release, mediated by co-chaperones. In mitochondria, it associates with the TIM (translocase of the inner membrane) protein complex to assist in the import and folding of mitochondrial proteins. Plays an important role in mitochondrial iron-sulfur cluster (ISC) biogenesis, interacts with and stabilizes ISC cluster assembly proteins FXN, NFU1, NFS1 and ISCU. Regulates erythropoiesis via stabilization of ISC assembly. Regulates mitochondrial calcium-dependent apoptosis by coupling two calcium channels, ITPR1 and VDAC1, at the mitochondria-associated endoplasmic reticulum (ER) membrane to facilitate calcium transport from the ER lumen to the mitochondria intermembrane space, providing calcium for the downstream calcium channel MCU, which releases it into the mitochondrial matrix. Although primarily located in the mitochondria, it is also found in other cellular compartments. In the cytosol, it associates with proteins involved in signaling, apoptosis, or senescence. It may play a role in cell cycle regulation via its interaction with and promotion of degradation of TP53. May play a role in the control of cell proliferation and cellular aging. Protects against reactive oxygen species (ROS). Extracellular HSPA9 plays a cytoprotective role by preventing cell lysis following immune attack by the membrane attack complex by disrupting formation of the complex. This Pongo abelii (Sumatran orangutan) protein is Stress-70 protein, mitochondrial.